The sequence spans 398 residues: Proteasome-activating nucleotidase (398 aa).

A coiled-coil region spans residues 3 to 60; sequence DSEIQYLLEKLKKLEEDYYKLRELYRRLEDEKKFIESERIRYEREVRRLRSEVERLRS. ATP contacts are provided by residues 185–190 and His-324; that span reads GTGKTL. Positions 396–398 are docks into pockets in the proteasome alpha-ring to cause gate opening; sequence MFV.

This sequence belongs to the AAA ATPase family. In terms of assembly, homohexamer. The hexameric complex has a two-ring architecture resembling a top hat that caps the 20S proteasome core at one or both ends. Upon ATP-binding, the C-terminus of PAN interacts with the alpha-rings of the proteasome core by binding to the intersubunit pockets.

It is found in the cytoplasm. Functionally, ATPase which is responsible for recognizing, binding, unfolding and translocation of substrate proteins into the archaeal 20S proteasome core particle. Is essential for opening the gate of the 20S proteasome via an interaction with its C-terminus, thereby allowing substrate entry and access to the site of proteolysis. Thus, the C-termini of the proteasomal ATPase function like a 'key in a lock' to induce gate opening and therefore regulate proteolysis. Unfolding activity requires energy from ATP hydrolysis, whereas ATP binding alone promotes ATPase-20S proteasome association which triggers gate opening, and supports translocation of unfolded substrates. The chain is Proteasome-activating nucleotidase from Archaeoglobus fulgidus (strain ATCC 49558 / DSM 4304 / JCM 9628 / NBRC 100126 / VC-16).